Consider the following 240-residue polypeptide: MTENTESPQSVATDIPEHKRRIKSFVLRQGRLSQAQQNAIDTMWPQYGLTLEDKLLDFNTLFGREAPTIIEIGFGMGNSLAAMAEAHPENNYIGIEVHRPGVGALLKLVAEKGLTNVRVFNEDAIEVLNRQIPKNSLSAVYLFFPDPWHKTKHKKRRILQAEFAEKIAQYLAPGGQFHMATDWEDYALHMMSVMSAAKGYRNISGEGQYTPRPDYRPLTKFEQRGHRLGHGVWDLVFERI.

S-adenosyl-L-methionine contacts are provided by E71, E96, D123, and D146. D146 is a catalytic residue. Substrate-binding positions include K150, D182, and 219–222 (TKFE).

It belongs to the class I-like SAM-binding methyltransferase superfamily. TrmB family.

It catalyses the reaction guanosine(46) in tRNA + S-adenosyl-L-methionine = N(7)-methylguanosine(46) in tRNA + S-adenosyl-L-homocysteine. It participates in tRNA modification; N(7)-methylguanine-tRNA biosynthesis. Functionally, catalyzes the formation of N(7)-methylguanine at position 46 (m7G46) in tRNA. The chain is tRNA (guanine-N(7)-)-methyltransferase from Hydrogenovibrio crunogenus (strain DSM 25203 / XCL-2) (Thiomicrospira crunogena).